Here is a 406-residue protein sequence, read N- to C-terminus: Cysteine desulfurase (406 aa).

Position 226 is an N6-(pyridoxal phosphate)lysine (Lys-226). Cys-364 (cysteine persulfide intermediate) is an active-site residue.

Belongs to the class-V pyridoxal-phosphate-dependent aminotransferase family. Csd subfamily. As to quaternary structure, homodimer. Interacts with SufE and the SufBCD complex composed of SufB, SufC and SufD. The interaction with SufE is required to mediate the direct transfer of the sulfur atom from the S-sulfanylcysteine. Requires pyridoxal 5'-phosphate as cofactor.

Its subcellular location is the cytoplasm. The catalysed reaction is (sulfur carrier)-H + L-cysteine = (sulfur carrier)-SH + L-alanine. It catalyses the reaction L-selenocysteine + AH2 = hydrogenselenide + L-alanine + A + H(+). Its pathway is cofactor biosynthesis; iron-sulfur cluster biosynthesis. In terms of biological role, cysteine desulfurases mobilize the sulfur from L-cysteine to yield L-alanine, an essential step in sulfur metabolism for biosynthesis of a variety of sulfur-containing biomolecules. Component of the suf operon, which is activated and required under specific conditions such as oxidative stress and iron limitation. Acts as a potent selenocysteine lyase in vitro, that mobilizes selenium from L-selenocysteine. Selenocysteine lyase activity is however unsure in vivo. This Escherichia coli O9:H4 (strain HS) protein is Cysteine desulfurase.